The following is a 2266-amino-acid chain: Protein ELYS (2266 aa).

A seven-bladed beta propeller repeats region spans residues 1–494; it reads MRDLRAQVTS…SGVVHLTCTG (494 aa). The necessary for cytoplasmic localization stretch occupies residues 1 to 981; the sequence is MRDLRAQVTS…QTLKINVMND (981 aa). Phosphoserine occurs at positions 509, 528, 1080, 1138, 1142, 1150, 1153, 1155, and 1160. The tract at residues 591–1092 is important for nuclear localization; it reads VVLTKEEFDR…IEEPSPIVYS (502 aa). The interval 1019–2266 is disordered; that stretch reads YHLSTSSVFR…PKQILRRKML (1248 aa). The interval 1149-2266 is necessary for nuclear localization; sequence RSLPSSSQLK…PKQILRRKML (1118 aa). T1175 carries the phosphothreonine modification. 5 positions are modified to phosphoserine: S1214, S1218, S1222, S1232, and S1250. A Phosphothreonine modification is found at T1257. S1283 and S1297 each carry phosphoserine. Polar residues-rich tracts occupy residues 1305 to 1320 and 1335 to 1353; these read KGNS…TTLE and FTAS…NVTE. Residue T1369 is modified to Phosphothreonine. Phosphoserine is present on residues S1371 and S1513. Positions 1446–1698 are mediates transcriptional activity; sequence RANDNKSMAD…MEQSIHETIP (253 aa). Residue T1517 is modified to Phosphothreonine. Phosphoserine occurs at positions 1533, 1541, 1729, and 1806. Composition is skewed to polar residues over residues 1796–1808 and 1822–1838; these read LSQN…NSVT and ILEN…ITTG. T1808 carries the phosphothreonine modification. The important for nuclear localization and chromatin binding stretch occupies residues 1842-2266; sequence KRLKSSQLLE…PKQILRRKML (425 aa). Residues S1878, S1884, and S1898 each carry the phosphoserine modification. Residues 1908 to 1919 are compositionally biased toward polar residues; the sequence is STNLDASENTGN. 2 stretches are compositionally biased toward basic and acidic residues: residues 1920-1930 and 1940-1952; these read KQDDKSSDKQL and GREV…REDS. Phosphoserine is present on residues S1944 and S1946. Positions 1971-1983 form a DNA-binding region, a.T hook; the sequence is PRKRGRPRKINPS. Over residues 1986–2004 the composition is skewed to basic and acidic residues; the sequence is VGSKAVKEERSPKKKEAPS. Residues S1996, S2043, S2044, and S2060 each carry the phosphoserine modification. The segment covering 2064 to 2084 has biased composition (basic and acidic residues); it reads VSEERTDEMTHKETNEQEERL. S2089, S2120, S2123, and S2154 each carry phosphoserine. A compositionally biased stretch (basic and acidic residues) spans 2169 to 2179; sequence NKLEDELKDDA. Basic residues predominate over residues 2188–2197; the sequence is PKAKRIRTSK. Phosphoserine occurs at positions 2212, 2222, and 2226.

This sequence belongs to the ELYS family. As to quaternary structure, associates with the Nup107-160 subcomplex of the NPC.

The protein resides in the cytoplasm. It is found in the nucleus. Its subcellular location is the nucleus envelope. It localises to the nucleus matrix. The protein localises to the chromosome. The protein resides in the centromere. It is found in the kinetochore. Its subcellular location is the nucleoplasm. It localises to the nuclear pore complex. Its function is as follows. Required for the assembly of a functional nuclear pore complex (NPC) on the surface of chromosomes as nuclei form at the end of mitosis. May initiate NPC assembly by binding to chromatin and recruiting the Nup107-160 subcomplex of the NPC. Also required for the localization of the Nup107-160 subcomplex of the NPC to the kinetochore during mitosis and for the completion of cytokinesis. This chain is Protein ELYS (AHCTF1), found in Homo sapiens (Human).